Consider the following 658-residue polypeptide: DNA-binding protein Rfx5 (658 aa).

The span at Met-1–Ser-10 shows a compositional bias: basic and acidic residues. The tract at residues Met-1 to Thr-28 is disordered. The residue at position 2 (Ala-2) is an N-acetylalanine. Ser-10 carries the post-translational modification Phosphoserine. The interval Gly-24 to Met-89 is N-terminal domain. Positions Leu-61 to Leu-65 are leucine-rich region; critical for dimer formation and for interaction with RFXAP. Residues Ala-91–Thr-167 constitute a DNA-binding region (RFX-type winged-helix). Positions Pro-172–Leu-177 match the PxLPxI/L motif; mediates interaction with RFXANK motif. Residue Ser-184 is modified to Phosphoserine. 4 disordered regions span residues Leu-250 to Pro-315, Ala-382 to Ala-422, Val-443 to Pro-602, and Lys-624 to Pro-658. The segment covering Gly-277–Val-309 has biased composition (basic and acidic residues). 2 stretches are compositionally biased toward gly residues: residues Ala-382 to Pro-398 and Pro-406 to Ala-422. 2 stretches are compositionally biased toward basic and acidic residues: residues Pro-465–Ala-476 and Pro-489–Gln-498. A compositionally biased stretch (basic residues) spans Lys-506 to Pro-516. Positions Pro-648 to Pro-658 are enriched in basic and acidic residues.

It belongs to the RFX family. Homodimer. The RFX heterotetrameric complex consists of 2 molecules of RFX5 and one each of RFXAP and RFX-B/RFXANK; with each subunit representing a separate complementation group. Interacts (via PxLPxI/L motif) with RFXANK (via ankyrin repeats); the interaction is direct. RFX forms cooperative DNA binding complexes with X2BP and CBF/NF-Y. RFX associates with CIITA to form an active transcriptional complex. In terms of processing, phosphorylated.

The protein localises to the nucleus. Activates transcription from class II MHC promoters. Recognizes X-boxes. Mediates cooperative binding between RFX and NF-Y. RFX binds the X1 box of MHC-II promoters. This chain is DNA-binding protein Rfx5 (Rfx5), found in Mus musculus (Mouse).